Here is a 318-residue protein sequence, read N- to C-terminus: Beta-ketoacyl-[acyl-carrier-protein] synthase III (318 aa).

Catalysis depends on residues Cys-112 and His-245. The tract at residues 246–250 is ACP-binding; sequence QANIR. Residue Asn-275 is part of the active site.

The protein belongs to the thiolase-like superfamily. FabH family. Homodimer.

The protein resides in the cytoplasm. It catalyses the reaction malonyl-[ACP] + acetyl-CoA + H(+) = 3-oxobutanoyl-[ACP] + CO2 + CoA. It functions in the pathway lipid metabolism; fatty acid biosynthesis. Its function is as follows. Catalyzes the condensation reaction of fatty acid synthesis by the addition to an acyl acceptor of two carbons from malonyl-ACP. Catalyzes the first condensation reaction which initiates fatty acid synthesis and may therefore play a role in governing the total rate of fatty acid production. Possesses both acetoacetyl-ACP synthase and acetyl transacylase activities. Its substrate specificity determines the biosynthesis of branched-chain and/or straight-chain of fatty acids. In Nitrosomonas europaea (strain ATCC 19718 / CIP 103999 / KCTC 2705 / NBRC 14298), this protein is Beta-ketoacyl-[acyl-carrier-protein] synthase III.